Here is a 259-residue protein sequence, read N- to C-terminus: DNA-directed RNA polymerase 30 kDa polypeptide (259 aa).

A TFIIS-type zinc finger spans residues 155 to 195 (YNTPCPNCKSRNTTPMMIQTRAADEPPLVRHACRDCKQHFK). Residues C159, C162, C187, and C190 each contribute to the Zn(2+) site. The tract at residues 220-259 (EILPDNNPSPPESPEPASPIDDGLIRATFDRNDEPPEDDE) is disordered. Residues 226–236 (NPSPPESPEPA) are compositionally biased toward pro residues.

The protein belongs to the poxviridae DNA-directed RNA polymerase 30 kDa subunit family. The DNA-dependent RNA polymerase (vRNAP) consists of eight subunits encoded by early viral genes and termed according to their apparent molecular masses Rpo147, Rpo132, Rpo35, Rpo30, Rpo22, Rpo19, Rpo18, and Rpo7. The same holoenzyme, with the addition of the transcription-specificity factor RAP94, is used for early gene expression.

The protein resides in the virion. The protein localises to the host cytoplasm. The catalysed reaction is RNA(n) + a ribonucleoside 5'-triphosphate = RNA(n+1) + diphosphate. Functionally, part of the DNA-dependent RNA polymerase which catalyzes the transcription of viral DNA into RNA using the four ribonucleoside triphosphates as substrates. Responsible for the transcription of early, intermediate and late genes. DNA-dependent RNA polymerase associates with the early transcription factor (ETF), itself composed of OPG118 and OPG134, thereby allowing the early genes transcription. Late transcription, and probably also intermediate transcription, require newly synthesized RNA polymerase. This is DNA-directed RNA polymerase 30 kDa polypeptide (OPG066) from Monkeypox virus.